Reading from the N-terminus, the 321-residue chain is NADPH-dependent codeinone reductase 1-3 (321 aa).

2 residues coordinate NADPH: T27 and D51. Catalysis depends on proton donor residues Y56 and H119. H119 lines the substrate pocket. Q187, S214, L216, S264, and R269 together coordinate NADPH. The segment at A300–D321 is disordered.

Belongs to the aldo/keto reductase family. As to expression, latex secreting cells (laticifer cells). Expressed constitutively in all organs with highest levels in capsules. Restricted to the parietal region of sieve elements adjacent or proximal to laticifers in roots, stems, leaves and carpels.

It localises to the cytoplasm. The protein localises to the cytosol. It carries out the reaction codeine + NADP(+) = codeinone + NADPH + H(+). The catalysed reaction is neopine + NADP(+) = neopinone + NADPH + H(+). The enzyme catalyses morphine + NADP(+) = morphinone + NADPH + H(+). It catalyses the reaction neomorphine + NADP(+) = neomorphinone + NADPH + H(+). It functions in the pathway alkaloid biosynthesis; morphine biosynthesis. Its function is as follows. NADPH-dependent codeinone reductase involved in biosynthesis of morphinan-type benzylisoquinoline and opiate alkaloids natural products. Reduces codeinone to codeine in the penultimate step in morphine biosynthesis. Can use morphinone, hydrocodone and hydromorphone as substrate during reductive reaction with NADPH as cofactor, and morphine and dihydrocodeine as substrate during oxidative reaction with NADP as cofactor. Converts morphinone to morphine, and neomorphinone to neomorphine. Reduces irreversibly neopinone, a spontaneous isomer of codeinone, to neopine; in planta, neopine levels are limited to low levels. This is NADPH-dependent codeinone reductase 1-3 from Papaver somniferum (Opium poppy).